Here is a 282-residue protein sequence, read N- to C-terminus: uncharacterized protein (282 aa).

It to M.tuberculosis Rv2161c and Rv3079c.

This is an uncharacterized protein from Mycobacterium tuberculosis (strain CDC 1551 / Oshkosh).